A 152-amino-acid chain; its full sequence is Orientotoxin-1 (152 aa).

As to expression, expressed by the venom gland.

Its subcellular location is the secreted. The catalysed reaction is a 1-acyl-sn-glycero-3-phosphocholine + H2O = sn-glycerol 3-phosphocholine + a fatty acid + H(+). In terms of biological role, neurotoxin of presynaptic effect which degrades lysophospholipids. In Vespa orientalis (Oriental hornet), this protein is Orientotoxin-1.